The primary structure comprises 211 residues: Pyridoxine/pyridoxamine 5'-phosphate oxidase (211 aa).

Substrate is bound by residues R7 to Y10 and K65. Residues R60–K65, F75–T76, R81, and K82 each bind FMN. The substrate site is built by Y122, R126, and S130. FMN contacts are provided by residues Q139 to S140 and W183. R189 to H191 lines the substrate pocket. Residue R193 coordinates FMN.

This sequence belongs to the pyridoxamine 5'-phosphate oxidase family. As to quaternary structure, homodimer. The cofactor is FMN.

The enzyme catalyses pyridoxamine 5'-phosphate + O2 + H2O = pyridoxal 5'-phosphate + H2O2 + NH4(+). It carries out the reaction pyridoxine 5'-phosphate + O2 = pyridoxal 5'-phosphate + H2O2. It participates in cofactor metabolism; pyridoxal 5'-phosphate salvage; pyridoxal 5'-phosphate from pyridoxamine 5'-phosphate: step 1/1. The protein operates within cofactor metabolism; pyridoxal 5'-phosphate salvage; pyridoxal 5'-phosphate from pyridoxine 5'-phosphate: step 1/1. Catalyzes the oxidation of either pyridoxine 5'-phosphate (PNP) or pyridoxamine 5'-phosphate (PMP) into pyridoxal 5'-phosphate (PLP). The polypeptide is Pyridoxine/pyridoxamine 5'-phosphate oxidase (Herminiimonas arsenicoxydans).